A 249-amino-acid polypeptide reads, in one-letter code: Testis-expressed protein 101 (249 aa).

The N-terminal stretch at 1 to 25 (MGTPRIQHLLILLVLGASLLTSGLE) is a signal peptide. 2 N-linked (GlcNAc...) asparagine glycosylation sites follow: Asn45 and Asn159. A UPAR/Ly6 domain is found at 140 to 211 (CPTCVALGTC…PMFVREACPH (72 aa)). Asn222 carries GPI-anchor amidated asparagine lipidation. Positions 223-249 (GATCLPIPVWGLQLLLPLLLPSFIHFS) are cleaved as a propeptide — removed in mature form.

Interacts with VAMP3. Interacts with LY6K. Interacts with DPEP3; co-localized on the cell surface of spermatocytes, spermatids, and testicular spermatozoa, co-localized only in cytoplasmic droplets of caput and corpus epididymal sperm. Interacts with ADAM5. In terms of processing, N-glycosylated; by high mannose and/or biantennary complex and/or certain types of hybrid oligosaccharides; possesses different oligosaccharides chains according to its subcellular localization in the testis. Post-translationally, sheds from membrane raft by ACE and released from the cell surface of epididymal sperm while it passes through the caput epididymis leading to disappearance of TEX101 on spermatozoa; is essential to produce fertile spermatozoa. In terms of tissue distribution, detected in testis and spermatogonia. Not detected in spermatocytes. Detected in blood leukocytes.

It is found in the cell membrane. The protein localises to the membrane raft. Its subcellular location is the cytoplasmic vesicle. The protein resides in the secretory vesicle. It localises to the acrosome. It is found in the secreted. Plays a role in fertilization by controlling binding of sperm to zona pellucida and migration of spermatozoa into the oviduct. May play a role in signal transduction and promote protein tyrosine phosphorylation. This Homo sapiens (Human) protein is Testis-expressed protein 101.